A 356-amino-acid polypeptide reads, in one-letter code: Phosphate acyltransferase (356 aa).

It belongs to the PlsX family. Homodimer. Probably interacts with PlsY.

Its subcellular location is the cytoplasm. The catalysed reaction is a fatty acyl-[ACP] + phosphate = an acyl phosphate + holo-[ACP]. The protein operates within lipid metabolism; phospholipid metabolism. Its function is as follows. Catalyzes the reversible formation of acyl-phosphate (acyl-PO(4)) from acyl-[acyl-carrier-protein] (acyl-ACP). This enzyme utilizes acyl-ACP as fatty acyl donor, but not acyl-CoA. The chain is Phosphate acyltransferase from Xanthobacter autotrophicus (strain ATCC BAA-1158 / Py2).